An 814-amino-acid polypeptide reads, in one-letter code: Kexin (814 aa).

The signal sequence occupies residues 1–19; that stretch reads MKVRKYITLCFWWAFSTSA. A propeptide spanning residues 20-109 is cleaved from the precursor; the sequence is LVSSQQIPLK…LFPRNDLFKR (90 aa). Asn42 carries N-linked (GlcNAc...) asparagine glycosylation. Residues 110-113 constitute a propeptide, removed by dipeptidylpeptidase STE13; sequence LPVP. Residues 114-678 are Lumenal-facing; that stretch reads APPMDSSLLP…KLSSPRQAMH (565 aa). Residue Asp135 coordinates Ca(2+). The 313-residue stretch at 141–453 folds into the Peptidase S8 domain; the sequence is QWHLVNPSFP…FGKIDAHKLI (313 aa). A glycan (N-linked (GlcNAc...) asparagine) is linked at Asn163. Catalysis depends on Asp175, which acts as the Charge relay system. Position 184 (Asp184) interacts with Ca(2+). The Charge relay system role is filled by His213. Ca(2+) contacts are provided by Asn227, Asp277, Asp320, and Glu350. Intrachain disulfides connect Cys230/Cys377 and Cys322/Cys352. Ser385 (charge relay system) is an active-site residue. N-linked (GlcNAc...) asparagine glycosylation is found at Asn404 and Asn480. A P/Homo B domain is found at 462 to 596; it reads VNAQTWFYLP…RLKLFGESID (135 aa). Positions 651 to 671 are disordered; it reads PQTTTASTDPDSDPNTPKKLS. The span at 653-667 shows a compositional bias: low complexity; it reads TTTASTDPDSDPNTP. Residues 679–699 form a helical membrane-spanning segment; sequence YFLTIFLIGATFLVLYFMFFM. The Cytoplasmic portion of the chain corresponds to 700 to 814; it reads KSRRRIRRSR…PDVPPSSGRS (115 aa). The interval 756–814 is disordered; that stretch reads SLSSSENGDAEHTIDSVLTNENPFSDPIKQKFPNDANAESASNKLQELQPDVPPSSGRS. The segment covering 792 to 801 has biased composition (polar residues); that stretch reads NAESASNKLQ.

Belongs to the peptidase S8 family. Furin subfamily. Ca(2+) is required as a cofactor. Post-translationally, O-glycosylated.

It is found in the golgi apparatus. The protein resides in the trans-Golgi network membrane. The catalysed reaction is Cleavage of -Lys-Arg-|-Xaa- and -Arg-Arg-|-Xaa- bonds to process yeast alpha-factor pheromone and killer toxin precursors.. Processing of precursors of alpha-factors and killer toxin. This chain is Kexin (KEX2), found in Saccharomyces cerevisiae (strain ATCC 204508 / S288c) (Baker's yeast).